The following is a 290-amino-acid chain: Homeobox protein HMX3-B (290 aa).

Disordered stretches follow at residues 1–41 and 96–169; these read MADS…GSSK and EKVN…KKKT. Residues 107–124 show a composition bias toward basic and acidic residues; it reads LDRHTPDPPKSDQESKEE. Over residues 125 to 137 the composition is skewed to acidic residues; that stretch reads SADDEIALEESDA. Basic and acidic residues predominate over residues 138 to 162; sequence EEPKKETDQEDDWMRKGEDLESDKK. The segment at residues 166–225 is a DNA-binding region (homeobox); the sequence is KKKTRTVFSRSQVFQLESTFDIKRYLSSSERAGLAASLHLTETQVKIWFQNRRNKWKRQL.

This sequence belongs to the HMX homeobox family. In terms of tissue distribution, expressed in the ear placode and vesicle and in cells forming the vestibulo-acoustic ganglion.

It localises to the nucleus. Its function is as follows. Transcription factor involved in specification of neuronal cell types and which is required for inner ear and hypothalamus development. Binds to the 5'-CAAGTG-3' core sequence. In Oryzias latipes (Japanese rice fish), this protein is Homeobox protein HMX3-B (hmx3b).